The primary structure comprises 300 residues: tRNA dimethylallyltransferase (300 aa).

Residue glycine 11–serine 18 participates in ATP binding. Residue threonine 13–serine 18 participates in substrate binding. The tract at residues aspartate 35 to glutamine 38 is interaction with substrate tRNA.

The protein belongs to the IPP transferase family. Monomer. Mg(2+) serves as cofactor.

It catalyses the reaction adenosine(37) in tRNA + dimethylallyl diphosphate = N(6)-dimethylallyladenosine(37) in tRNA + diphosphate. Catalyzes the transfer of a dimethylallyl group onto the adenine at position 37 in tRNAs that read codons beginning with uridine, leading to the formation of N6-(dimethylallyl)adenosine (i(6)A). The sequence is that of tRNA dimethylallyltransferase from Borrelia turicatae (strain 91E135).